We begin with the raw amino-acid sequence, 117 residues long: Large ribosomal subunit protein uL18 (117 aa).

Belongs to the universal ribosomal protein uL18 family. Part of the 50S ribosomal subunit; part of the 5S rRNA/L5/L18/L25 subcomplex. Contacts the 5S and 23S rRNAs.

Its function is as follows. This is one of the proteins that bind and probably mediate the attachment of the 5S RNA into the large ribosomal subunit, where it forms part of the central protuberance. This chain is Large ribosomal subunit protein uL18, found in Histophilus somni (strain 129Pt) (Haemophilus somnus).